The sequence spans 165 residues: Nucleotide-binding protein Tfu_2672 (165 aa).

It belongs to the YajQ family.

Nucleotide-binding protein. The polypeptide is Nucleotide-binding protein Tfu_2672 (Thermobifida fusca (strain YX)).